We begin with the raw amino-acid sequence, 79 residues long: UPF0180 protein BcerKBAB4_1316 (79 aa).

Belongs to the UPF0180 family.

The chain is UPF0180 protein BcerKBAB4_1316 from Bacillus mycoides (strain KBAB4) (Bacillus weihenstephanensis).